A 184-amino-acid chain; its full sequence is Uroplakin-2 (184 aa).

The first 25 residues, 1-25 (MASTLPVQTLPLILILLAVLAPGTA), serve as a signal peptide directing secretion. The propeptide occupies 26–84 (DFNISSLSGLLSPALTESLLIALPPCHLTGGNATLMVRRANDSKVVKSDFVVPPCRGRR). Asn28, Asn57, and Asn66 each carry an N-linked (GlcNAc...) asparagine glycan. The Lumenal segment spans residues 85-155 (ELVSVVDSGS…IGLGMARTGG (71 aa)). The helical transmembrane segment at 156–180 (MVVITVLLSVAMFLLVVGLIVALHW) threads the bilayer. At 181–184 (DARK) the chain is on the cytoplasmic side.

Belongs to the uroplakin-2 family. As to quaternary structure, interacts with uroplakin-1a (UPK1A).

It localises to the cell membrane. In terms of biological role, component of the asymmetric unit membrane (AUM); a highly specialized biomembrane elaborated by terminally differentiated urothelial cells. May play an important role in regulating the assembly of the AUM. The chain is Uroplakin-2 (Upk2) from Mus musculus (Mouse).